The primary structure comprises 125 residues: Histone H2B (125 aa).

Residues 1–32 form a disordered region; that stretch reads MAPKVRAAKKGEKRVGKAKSGTAETAKRRRGK. O-linked (GlcNAc) serine glycosylation is present at Ser112. A Glycyl lysine isopeptide (Lys-Gly) (interchain with G-Cter in ubiquitin) cross-link involves residue Lys120.

The protein belongs to the histone H2B family. The nucleosome is a histone octamer containing two molecules each of H2A, H2B, H3 and H4 assembled in one H3-H4 heterotetramer and two H2A-H2B heterodimers. The octamer wraps approximately 147 bp of DNA. Post-translationally, monoubiquitination of Lys-120 gives a specific tag for epigenetic transcriptional activation and is also prerequisite for histone H3 'Lys-4' and 'Lys-79' methylation. GlcNAcylation at Ser-112 promotes monoubiquitination of Lys-120. It fluctuates in response to extracellular glucose, and associates with transcribed genes.

The protein localises to the nucleus. Its subcellular location is the chromosome. Core component of nucleosome. Nucleosomes wrap and compact DNA into chromatin, limiting DNA accessibility to the cellular machineries which require DNA as a template. Histones thereby play a central role in transcription regulation, DNA repair, DNA replication and chromosomal stability. DNA accessibility is regulated via a complex set of post-translational modifications of histones, also called histone code, and nucleosome remodeling. This Acropora formosa (Staghorn coral) protein is Histone H2B.